We begin with the raw amino-acid sequence, 80 residues long: uncharacterized protein (80 aa).

The helical transmembrane segment at 12–32 (FKIIALILLIVLIINLSYKLF) threads the bilayer.

It is found in the membrane. This is an uncharacterized protein from Saccharomyces cerevisiae (strain ATCC 204508 / S288c) (Baker's yeast).